The chain runs to 2527 residues: Neurogenic locus notch homolog protein 1 (2527 aa).

The signal sequence occupies residues 1 to 36 (MGRSDSRAGALLEGGCEQNIDPRRAAHCHHPRLATS). Residues 37–1741 (SLRCSQPSGT…VEPPLPSQLH (1705 aa)) are Extracellular-facing. Cystine bridges form between C40-C53, C47-C62, C64-C73, C79-C90, C84-C103, C105-C114, C122-C133, C127-C143, C145-C154, C160-C171, C165-C180, C182-C191, C198-C211, C205-C220, C222-C231, C238-C249, C243-C259, C261-C270, C277-C288, C282-C297, C299-C308, C315-C328, C322-C337, C339-C348, C355-C366, C360-C375, C377-C386, C392-C403, C397-C414, C416-C425, C432-C445, C439-C454, and C456-C465. Residue N57 is glycosylated (N-linked (GlcNAc...) asparagine). EGF-like domains lie at 75–115 (DPNP…PLCL), 118–155 (LDNA…KSCQ), and 156–192 (QADP…PTCR). Residue S81 is glycosylated (O-linked (Glc...) serine). O-linked (Fuc...) threonine glycosylation is present at T89. T132 carries O-linked (Fuc...) threonine glycosylation. The O-linked (Glc...) serine glycan is linked to S162. Residues 194 to 232 (DVNECSQNPGLCRHGGTCHNEIGSYRCVCRATHTGPHCE) enclose the EGF-like 4; calcium-binding domain. O-linked (Fuc...) threonine glycosylation is present at T210. The EGF-like 5 domain maps to 234–271 (PYVPCSPSPCQNGGTCRPTGDTTHECACLPGFAGQNCE). An O-linked (Fuc...) threonine; alternate glycan is attached at T248. T248 carries an O-linked (GalNAc...) threonine; alternate glycan. The 37-residue stretch at 273-309 (NVDDCPGNNCKNGGACVDGVNTYNCRCPPEWTGQYCT) folds into the EGF-like 6; calcium-binding domain. The EGF-like 7; calcium-binding domain occupies 311-349 (DVDECQLMPNACQNGGTCHNTHGGYNCVCVNGWTGEDCS). An O-linked (Fuc...) threonine glycan is attached at T327. In terms of domain architecture, EGF-like 8; calcium-binding spans 351–387 (NIDDCASAACFQGATCHDRVASFYCECPHGRTGLLCH). The O-linked (Glc...) serine glycan is linked to S357. O-linked (Fuc...) threonine glycosylation occurs at T365. In terms of domain architecture, EGF-like 9 spans 388 to 426 (LNDACISNPCNEGSNCDTNPVNGKAICTCPSGYTGPACS). The O-linked (Glc...) serine glycan is linked to S394. Positions 428–466 (DVDECALGANPCEHAGKCLNTLGSFECQCLQGYTGPRCE) constitute an EGF-like 10; calcium-binding domain. An interaction with DLL4 region spans residues 436–437 (AN). Ca(2+) is bound by residues T448 and S451. S451 carries O-linked (Glc...) serine glycosylation. Residues 464–468 (RCEID) are interaction with DLL4. D468, V469, and E471 together coordinate Ca(2+). In terms of domain architecture, EGF-like 11; calcium-binding spans 468–504 (DVNECISNPCQNDATCLDQIGEFQCICMPGYEGVYCE). Intrachain disulfides connect C472/C483, C477/C492, and C494/C503. O-linked (Glc...) serine glycosylation occurs at S474. T482 carries O-linked (Fuc...) threonine glycosylation. Ca(2+) is bound by residues D485 and Q486. Ca(2+) contacts are provided by N506, T507, and E509. The 37-residue stretch at 506 to 542 (NTDECASSPCLHNGHCMDKINEFLCQCPKGFSGHLCQ) folds into the EGF-like 12; calcium-binding domain. Cystine bridges form between C510/C521, C515/C530, C532/C541, C548/C559, C553/C568, C570/C579, C586/C596, C591/C605, C607/C616, C623/C634, C628/C643, C645/C654, C661/C671, C666/C680, C682/C691, C698/C709, C703/C718, C720/C729, C736/C746, C741/C755, C757/C766, C773/C784, C778/C793, C795/C804, C811/C822, C816/C831, C833/C842, and C849/C860. O-linked (Glc...) serine glycosylation is present at S512. Ca(2+) contacts are provided by D523 and K524. The region spanning 544 to 580 (DVDECASTPCKNGAKCLDGPNTYTCVCTEGYTGTHCE) is the EGF-like 13; calcium-binding domain. Residue S550 is glycosylated (O-linked (Glc...) serine). The region spanning 582–617 (DIDECDPDPCHYGFCKDGVATFTCLCQPGYTGHHCE) is the EGF-like 14; calcium-binding domain. One can recognise an EGF-like 15; calcium-binding domain in the interval 619 to 655 (NINECHSQPCRHGGTCQDRDNSYLCLCLKGTTGPNCE). An O-linked (Glc...) serine glycan is attached at S625. T633 carries O-linked (Fuc...) threonine glycosylation. The 36-residue stretch at 657–692 (NLDDCASNPCDSGTCLDKIDGYECACEPGYTGSMCN) folds into the EGF-like 16; calcium-binding domain. S663 carries O-linked (Glc...) serine glycosylation. The 37-residue stretch at 694-730 (NIDECAGSPCHNGGTCEDGIAGFTCRCPEGYHDPTCL) folds into the EGF-like 17; calcium-binding domain. A glycan (O-linked (Fuc...) threonine) is linked at T708. One can recognise an EGF-like 18; calcium-binding domain in the interval 732-767 (EVNECNSNPCIHGACRDGLNGYKCDCAPGWSGTNCD). An O-linked (Glc...) serine glycan is attached at S738. An EGF-like 19 domain is found at 769-805 (NNNECESNPCVNGGTCKDMTSGYVCTCREGFSGPNCQ). S775 is a glycosylation site (O-linked (Glc...) serine). T783 is a glycosylation site (O-linked (Fuc...) threonine). The O-linked (GlcNAc) serine glycan is linked to S800. Residues 807–843 (NINECASNPCLNQGTCIDDVAGYKCNCPLPYTGATCE) enclose the EGF-like 20; calcium-binding domain. An O-linked (Glc...) serine glycan is attached at S813. T821 carries an O-linked (Fuc...) threonine glycan. The region spanning 845–883 (VLAPCATSPCKNSGVCKESEDYESFSCVCPTGWQGQTCE) is the EGF-like 21 domain. The EGF-like 22; calcium-binding domain occupies 885–921 (DINECVKSPCRHGASCQNTNGSYRCLCQAGYTGRNCE). N-linked (GlcNAc...) asparagine glycosylation occurs at N904. T916 is a glycosylation site (O-linked (GlcNAc) threonine). The EGF-like 23 domain maps to 923-959 (DIDDCRPNPCHNGGSCTDGINMAFCDCLPGFQGAFCE). O-linked (Fuc) serine glycosylation occurs at S937. Positions 961-997 (DINECASNPCRNGANCTDCVDSYTCTCPAGFNGIHCE) constitute an EGF-like 24; calcium-binding domain. An O-linked (Glc...) serine glycan is attached at S967. An N-linked (GlcNAc...) asparagine glycan is attached at N975. 5 consecutive EGF-like domains span residues 999–1035 (NTPD…SYCQ), 1037–1073 (DVNE…LNCQ), 1075–1111 (LVHW…FNCD), 1113–1159 (LSVS…SYCE), and 1161–1197 (EVDE…SNCS). T1013 carries O-linked (Fuc...) threonine glycosylation. A glycan (O-linked (Glc...) serine) is linked at S1043. The O-linked (Fuc...) threonine glycan is linked to T1051. S1081 is a glycosylation site (O-linked (Glc...) serine). A disulfide bridge connects residues C1117 and C1138. O-linked (Fuc...) threonine glycosylation occurs at T1175. N-linked (GlcNAc...) asparagine glycosylation occurs at N1195. The region spanning 1199–1235 (EINECLSQPCQNGGTCIDLTNTYKCSCPRGTQGVHCE) is the EGF-like 30; calcium-binding domain. The O-linked (Glc...) serine glycan is linked to S1205. The O-linked (Fuc...) threonine glycan is linked to T1213. Residues 1237-1281 (NVDDCHPHLDPASRSPKCFNNGTCVDQVGGYSCTCPPGFVGERCE) enclose the EGF-like 31; calcium-binding domain. N1257 is a glycosylation site (N-linked (GlcNAc...) asparagine). EGF-like domains follow at residues 1283-1321 (DINE…RRCE), 1323-1362 (VING…ATCE), 1364-1400 (DART…PECQ), and 1403-1442 (ASSP…LLCH). An O-linked (Glc...) serine glycan is attached at S1289. T1378 carries an O-linked (Fuc...) threonine glycan. O-linked (GlcNAc...) threonine glycosylation is present at T1395. Residue T1418 is glycosylated (O-linked (Fuc...) threonine; alternate). A glycan (O-linked (GalNAc...) threonine; alternate) is linked at T1418. 3 LNR repeats span residues 1465-1505 (CELP…PWKN), 1506-1547 (CTQS…CNPL), and 1548-1587 (YDQY…RLAA). Ca(2+) is bound by residues D1473, N1476, D1491, and D1494. The N-linked (GlcNAc...) asparagine glycan is linked to N1505. The N-linked (GlcNAc...) asparagine glycan is linked to N1603. T1731 carries O-linked (GalNAc...) threonine glycosylation. The segment at 1734–1766 (PPLPSQLHLMYLAAAAFVLLFFVGCGVLLSRKR) is interaction with PSEN1. The helical transmembrane segment at 1742-1762 (LMYLAAAAFVLLFFVGCGVLL) threads the bilayer. At 1763-2527 (SRKRRRQHGQ…QITHIPEAFK (765 aa)) the chain is on the cytoplasmic side. K1765 is covalently cross-linked (Glycyl lysine isopeptide (Lys-Gly) (interchain with G-Cter in ubiquitin)). Residues 1786–1814 (KKKRREPLGEDSVGLKPLKNASDGALMDD) are disordered. Phosphothreonine is present on T1867. ANK repeat units lie at residues 1933–1962 (TGET…DANI), 1966–1996 (MGRT…DLDA), 2000–2029 (DGTT…DVNA), 2033–2062 (LGKS…NKDM), and 2066–2095 (KEET…NRDI). Residues 1953-1961 (LLEASADAN) are HIF1AN-binding. The residue at position 1961 (N1961) is a (3S)-3-hydroxyasparagine; by HIF1AN; partial. The segment at 2020-2028 (LINSHADVN) is HIF1AN-binding. N2028 is subject to (3S)-3-hydroxyasparagine; by HIF1AN. Disordered stretches follow at residues 2157–2201 (SATQ…DSSS), 2378–2424 (QPQN…SLPV), and 2436–2527 (PTSL…EAFK). The segment covering 2378 to 2391 (QPQNLQPPSQPHLS) has biased composition (low complexity). Polar residues predominate over residues 2436 to 2474 (PTSLPSSMVPPMTTTQFLTPPSQHSYSSSPVDNTPSHQL). The span at 2484–2499 (PSPESPDQWSSSSPHS) shows a compositional bias: low complexity. Over residues 2500 to 2520 (NISDWSEGISSPPTSMPSQIT) the composition is skewed to polar residues.

Belongs to the NOTCH family. As to quaternary structure, heterodimer of a C-terminal fragment N(TM) and an N-terminal fragment N(EC) which are probably linked by disulfide bonds. Interacts with DNER, DTX1, DTX2 and RBPJ/RBPSUH. Also interacts with MAML1, MAML2 and MAML3 which act as transcriptional coactivators for NOTCH1. Notch 1 intracellular domain interacts with SNW1; the interaction involves multimerized NOTCH1 NICD and is implicated in a formation of an intermediate preactivation complex which associates with DNA-bound CBF-1/RBPJ. The activated membrane-bound form interacts with AAK1 which promotes NOTCH1 stabilization. Forms a trimeric complex with FBXW7 and SGK1. Interacts with HIF1AN. HIF1AN negatively regulates the function of notch intracellular domain (NICD), accelerating myogenic differentiation. Interacts (via NICD) with SNAI1 (via zinc fingers); the interaction induces SNAI1 degradation via MDM2-mediated ubiquitination and inhibits SNAI1-induced cell invasion. Interacts (via NICD) with MDM2A. Interacts (via NICD) with BCL6; the interaction decreases MAML1 recruitment by NOTCH1 NICD on target genes DNA and inhibits NOTCH1 transactivation activity. Interacts with THBS4. Interacts (via the EGF-like repeat region) with CCN3 (via CTCK domain). Interacts (via EGF-like domains) with DLL4 (via N-terminal DSL and MNNL domains). Interacts with ZMIZ1. Interacts (via NICD domain) with MEGF10 (via the cytoplasmic domain). Interacts with DLL1 and JAG1. Interacts (via NICD domain) with PRAG1. Forms a complex with PRAG1, N1ICD and MAML1, in a MAML1-dependent manner. Interacts (via transmembrane region) with PSEN1; the interaction is direct. Interacts with ZFP64. In terms of processing, synthesized in the endoplasmic reticulum as an inactive form which is proteolytically cleaved by a furin-like convertase in the trans-Golgi network before it reaches the plasma membrane to yield an active, ligand-accessible form. Cleavage results in a C-terminal fragment N(TM) and a N-terminal fragment N(EC). Following ligand binding, it is cleaved by ADAM17 to yield a membrane-associated intermediate fragment called notch extracellular truncation (NEXT). Following endocytosis, this fragment is then cleaved by one of the catalytic subunits of gamma-secretase (PSEN1 or PSEN2) to release a Notch-derived peptide containing the intracellular domain (NICD) from the membrane. Post-translationally, phosphorylated. O-linked glycosylation by GALNT11 is involved in determination of left/right symmetry: glycosylation promotes activation of NOTCH1, possibly by promoting cleavage by ADAM17, modulating the balance between motile and immotile (sensory) cilia at the left-right organiser (LRO). O-glycosylated on the EGF-like domains. O-glucosylated at Ser-451 by KDELC1 and KDELC2. Contains both O-linked fucose and O-linked glucose in the EGF-like domains 11, 12 and 13, which are interacting with the residues on DLL4. MFNG-, RFNG- and LFNG-mediated modification of O-fucose residues at specific EGF-like domains results in inhibition of its activation by JAG1 and enhancement of its activation by DLL1 via an increased binding to DLL1. In terms of processing, ubiquitinated. Undergoes 'Lys-29'-linked polyubiquitination by ITCH; promotes the lysosomal degradation of non-activated internalized NOTCH1. Deubiquitination by USP12 is required for transport of internalized non-activated receptor from late endosomes to lysosomes for degradation. Monoubiquitination at Lys-1765 is required for activation by gamma-secretase cleavage, it promotes interaction with AAK1, which stabilizes it. Deubiquitination by EIF3F is necessary for nuclear import of activated Notch. Post-translationally, hydroxylated at Asn-1961 by HIF1AN. Hydroxylated at Asn-2028 by HIF1AN. Hydroxylation reduces affinity for HI1AN and may thus indirectly modulate negative regulation of NICD.

Its subcellular location is the cell membrane. The protein resides in the late endosome membrane. It localises to the nucleus. Functionally, functions as a receptor for membrane-bound ligands Jagged-1 (JAG1), Jagged-2 (JAG2) and Delta-1 (DLL1) to regulate cell-fate determination. Upon ligand activation through the released notch intracellular domain (NICD) it forms a transcriptional activator complex with RBPJ/RBPSUH and activates genes of the enhancer of split locus. Affects the implementation of differentiation, proliferation and apoptotic programs. Involved in angiogenesis; negatively regulates endothelial cell proliferation and migration and angiogenic sprouting. Involved in the maturation of both CD4(+) and CD8(+) cells in the thymus. Important for follicular differentiation and possibly cell fate selection within the follicle. During cerebellar development, functions as a receptor for neuronal DNER and is involved in the differentiation of Bergmann glia. Represses neuronal and myogenic differentiation. May play an essential role in postimplantation development, probably in some aspect of cell specification and/or differentiation. May be involved in mesoderm development, somite formation and neurogenesis. May enhance HIF1A function by sequestering HIF1AN away from HIF1A. Required for the THBS4 function in regulating protective astrogenesis from the subventricular zone (SVZ) niche after injury. Involved in determination of left/right symmetry by modulating the balance between motile and immotile (sensory) cilia at the left-right organiser (LRO). The sequence is that of Neurogenic locus notch homolog protein 1 (NOTCH1) from Cricetulus griseus (Chinese hamster).